A 286-amino-acid chain; its full sequence is N-alpha-acetyltransferase 80 (286 aa).

Residues 33–54 (TFNPGPTELTLDPEHQPEETPA) are disordered. The N-acetyltransferase domain occupies 60 to 207 (LTLEPVHRRP…VFTSRRLPAT (148 aa)). Substrate contacts are provided by residues Arg85 and 90–93 (RLHS). Acetyl-CoA is bound by residues 141 to 143 (VVV), 149 to 154 (GRGFGR), and Gln179. Residues 212–269 (FPTAPSPRPPRKAPNLTAQAAPRGPKGPPLPPPPPLPECLTISPPVPSGPPSKSLLET) are disordered. Residues 236-248 (PKGPPLPPPPPLP) are compositionally biased toward pro residues.

Belongs to the acetyltransferase family. Strongly expressed in heart and skeletal muscle, followed by brain and pancreas, with weak expression in kidney, liver, and lung and no expression in placenta.

The protein localises to the cytoplasm. It is found in the cytosol. The enzyme catalyses N-terminal L-aspartyl-L-aspartyl-L-aspartyl-[protein] + acetyl-CoA = N-terminal N-acetyl-L-aspartyl-L-aspartyl-L-aspartyl-[protein] + CoA + H(+). It catalyses the reaction N-terminal L-glutamyl-L-glutamyl-L-glutamyl-[protein] + acetyl-CoA = N-terminal N-acetyl-L-glutamyl-L-glutamyl-L-glutamyl-[protein] + CoA + H(+). Its function is as follows. N-alpha-acetyltransferase that specifically mediates the acetylation of the acidic amino terminus of processed forms of beta- and gamma-actin (ACTB and ACTG, respectively). N-terminal acetylation of processed beta- and gamma-actin regulates actin filament depolymerization and elongation. In vivo, preferentially displays N-terminal acetyltransferase activity towards acid N-terminal sequences starting with Asp-Asp-Asp and Glu-Glu-Glu. In vitro, shows high activity towards Met-Asp-Glu-Leu and Met-Asp-Asp-Asp. May act as a tumor suppressor. This chain is N-alpha-acetyltransferase 80, found in Homo sapiens (Human).